Reading from the N-terminus, the 165-residue chain is MNSLRIARAALRVRPTAVRAPLQRRGYAEAVADKIKLSLSLPHQAIYKSQDVVQVNIPAVSGEMGVLANHVPSIEQLKPGLVEVIEESGSNKQYFLSGGFAVVQPGSKLSINAVEGYALEDFSAEAVRAQIAEAQKIVSGGGSQQDIAEAQVELEVLESLQAVLK.

A mitochondrion-targeting transit peptide spans 1-27 (MNSLRIARAALRVRPTAVRAPLQRRGY).

It belongs to the ATPase epsilon chain family. F-type ATPases have 2 components, CF(1) - the catalytic core - and CF(0) - the membrane proton channel. CF(1) has five subunits: alpha(3), beta(3), gamma(1), delta(1), epsilon(1). CF(0) has three main subunits: a, b and c.

The protein resides in the mitochondrion. The protein localises to the mitochondrion inner membrane. Functionally, mitochondrial membrane ATP synthase (F(1)F(0) ATP synthase or Complex V) produces ATP from ADP in the presence of a proton gradient across the membrane which is generated by electron transport complexes of the respiratory chain. F-type ATPases consist of two structural domains, F(1) - containing the extramembraneous catalytic core, and F(0) - containing the membrane proton channel, linked together by a central stalk and a peripheral stalk. During catalysis, ATP turnover in the catalytic domain of F(1) is coupled via a rotary mechanism of the central stalk subunits to proton translocation. Part of the complex F(1) domain and of the central stalk which is part of the complex rotary element. Rotation of the central stalk against the surrounding alpha(3)beta(3) subunits leads to hydrolysis of ATP in three separate catalytic sites on the beta subunits. The chain is ATP synthase subunit delta, mitochondrial (des) from Neurospora crassa (strain ATCC 24698 / 74-OR23-1A / CBS 708.71 / DSM 1257 / FGSC 987).